Reading from the N-terminus, the 613-residue chain is Autophagy-related protein 22-2 (613 aa).

A disordered region spans residues 1-30 (MAFNSTPPVSPGGEAQQRPPRFPGEDTTPT). Residues 41–61 (YGIAAEVFAVCGVGSFLPLTL) form a helical membrane-spanning segment. The N-linked (GlcNAc...) asparagine glycan is linked to Asn90. Helical transmembrane passes span 120–140 (SFAM…LISF), 167–187 (LFIF…VVGV), 189–209 (CLGS…ANDP), 278–298 (VGLG…MLFA), 307–327 (ISGT…WFSF), 382–402 (VIIF…VSGT), and 418–438 (VGLL…LWPV). N-linked (GlcNAc...) asparagine glycosylation occurs at Asn448. Transmembrane regions (helical) follow at residues 453–473 (LCIA…IPLF), 477–497 (GVVG…HGLV), 508–528 (FFGL…YAAT), and 553–573 (GFFF…MVNA). Residues 592-613 (REHASEYGGPSEEAEGLLARDI) are disordered.

This sequence belongs to the ATG22 family.

It is found in the vacuole membrane. Vacuolar effluxer which mediate the efflux of amino acids resulting from autophagic degradation. The release of autophagic amino acids allows the maintenance of protein synthesis and viability during nitrogen starvation. In Aspergillus fumigatus (strain ATCC MYA-4609 / CBS 101355 / FGSC A1100 / Af293) (Neosartorya fumigata), this protein is Autophagy-related protein 22-2 (atg22-2).